The chain runs to 108 residues: Nucleoid-associated protein Mpe_A2533 (108 aa).

Positions 86-108 are disordered; sequence TSEEKMGKLTAGMPLPPGMKLPF. The segment covering 99-108 has biased composition (pro residues); that stretch reads PLPPGMKLPF.

Belongs to the YbaB/EbfC family. As to quaternary structure, homodimer.

It localises to the cytoplasm. The protein localises to the nucleoid. Binds to DNA and alters its conformation. May be involved in regulation of gene expression, nucleoid organization and DNA protection. The polypeptide is Nucleoid-associated protein Mpe_A2533 (Methylibium petroleiphilum (strain ATCC BAA-1232 / LMG 22953 / PM1)).